The chain runs to 226 residues: MLLQNIPAIAVVLKDKDVLSIPKEELKGADLIELRVDMFEKTENISDIFETAKRKYNLPLLCTIRLPEEGGKREIKNRVEIYQAVIPFCNFFDIEIFSNEAPFLRQLSIKNNITLIGSYHNFINTPSMEQLEEVFDRGKTMGMDIIKIATMVNEKKDIETLLYFTLRHKLDRIIVLGMGQKGIPSRIINPVFGSMITYASLNEISAPGQIHLKDMVHIFKVMGLRG.

Residues 33–35 (ELR) and Arg65 contribute to the 3-dehydroquinate site. The active-site Proton donor/acceptor is His120. Lys147 acts as the Schiff-base intermediate with substrate in catalysis. 3-dehydroquinate-binding residues include Arg186, Ser205, and Gln209.

The protein belongs to the type-I 3-dehydroquinase family. In terms of assembly, homodimer.

It carries out the reaction 3-dehydroquinate = 3-dehydroshikimate + H2O. It functions in the pathway metabolic intermediate biosynthesis; chorismate biosynthesis; chorismate from D-erythrose 4-phosphate and phosphoenolpyruvate: step 3/7. Involved in the third step of the chorismate pathway, which leads to the biosynthesis of aromatic amino acids. Catalyzes the cis-dehydration of 3-dehydroquinate (DHQ) and introduces the first double bond of the aromatic ring to yield 3-dehydroshikimate. The sequence is that of 3-dehydroquinate dehydratase from Thermodesulfovibrio yellowstonii (strain ATCC 51303 / DSM 11347 / YP87).